Reading from the N-terminus, the 230-residue chain is Endonuclease NucS (230 aa).

The protein belongs to the NucS endonuclease family.

The protein localises to the cytoplasm. In terms of biological role, cleaves both 3' and 5' ssDNA extremities of branched DNA structures. The polypeptide is Endonuclease NucS (Corynebacterium glutamicum (strain ATCC 13032 / DSM 20300 / JCM 1318 / BCRC 11384 / CCUG 27702 / LMG 3730 / NBRC 12168 / NCIMB 10025 / NRRL B-2784 / 534)).